The primary structure comprises 289 residues: Energy-coupling factor transporter ATP-binding protein EcfA2 (289 aa).

One can recognise an ABC transporter domain in the interval Ile3–Asp245. Gly40 to Ser47 lines the ATP pocket.

Belongs to the ABC transporter superfamily. Energy-coupling factor EcfA family. In terms of assembly, forms a stable energy-coupling factor (ECF) transporter complex composed of 2 membrane-embedded substrate-binding proteins (S component), 2 ATP-binding proteins (A component) and 2 transmembrane proteins (T component).

It localises to the cell membrane. Its function is as follows. ATP-binding (A) component of a common energy-coupling factor (ECF) ABC-transporter complex. Unlike classic ABC transporters this ECF transporter provides the energy necessary to transport a number of different substrates. This chain is Energy-coupling factor transporter ATP-binding protein EcfA2, found in Lactobacillus johnsonii (strain CNCM I-12250 / La1 / NCC 533).